The chain runs to 636 residues: Alpha-L-iduronidase (636 aa).

An N-terminal signal peptide occupies residues 1-16 (MLSLLLVLTTLARIHA). Alpha-D-mannopyranose-binding residues include Pro39, Ile43, and His45. Alpha-L-iduronate contacts are provided by His78, Asn169, and Glu170. Glu170 acts as the Proton donor in catalysis. Asn180 carries an N-linked (GlcNAc...) asparagine glycan. Residue Lys257 coordinates alpha-L-iduronate. Asn268 is a glycosylation site (N-linked (GlcNAc...) asparagine). Residues Glu293 and Gly299 each coordinate alpha-L-iduronate. Residue Glu293 is the Nucleophile of the active site. Trp300 lines the alpha-D-mannopyranose pocket. The alpha-L-iduronate site is built by Asp342 and Arg356. Residues Asn365, Asn448, Asn453, and Asn483 are each glycosylated (N-linked (GlcNAc...) asparagine). Residues Cys529 and Cys565 are joined by a disulfide bond. Asn622 carries N-linked (GlcNAc...) asparagine glycosylation.

Belongs to the glycosyl hydrolase 39 family.

The protein localises to the lysosome. It catalyses the reaction Hydrolysis of unsulfated alpha-L-iduronosidic linkages in dermatan sulfate.. In terms of biological role, essential lysosomal hydrolase responsible for the degradation of glycosaminoglycans (GAG) such as heparan sulfate. Required for lysosome function and autophagy. Consequently, has an essential role in the development, maintenance and function of various cells, tissues, and organs, including the muscles and the central nervous system (CNS). This Drosophila melanogaster (Fruit fly) protein is Alpha-L-iduronidase.